Consider the following 176-residue polypeptide: Probable inosine/xanthosine triphosphatase (176 aa).

Mg(2+) is bound at residue Asp-36.

It belongs to the YjjX NTPase family. Homodimer. The cofactor is Mg(2+). It depends on Mn(2+) as a cofactor.

The catalysed reaction is XTP + H2O = XDP + phosphate + H(+). The enzyme catalyses ITP + H2O = IDP + phosphate + H(+). Functionally, phosphatase that hydrolyzes non-canonical purine nucleotides such as XTP and ITP to their respective diphosphate derivatives. Probably excludes non-canonical purines from DNA/RNA precursor pool, thus preventing their incorporation into DNA/RNA and avoiding chromosomal lesions. The protein is Probable inosine/xanthosine triphosphatase of Saccharolobus islandicus (strain M.14.25 / Kamchatka #1) (Sulfolobus islandicus).